Here is a 1441-residue protein sequence, read N- to C-terminus: Cleavage and polyadenylation specificity factor subunit 1 (1441 aa).

4 disordered regions span residues 404–435 (PASS…GGKT), 545–569 (EEET…DGRR), 713–775 (GGAR…PAPF), and 899–921 (FREK…EGSG). Residues 410–419 (EAADKEEPPS) are compositionally biased toward basic and acidic residues. 2 positions are modified to phosphoserine: serine 754 and serine 764. The segment covering 756–773 (SKEEARRSSQPPADRDPA) has biased composition (basic and acidic residues).

This sequence belongs to the CPSF1 family. Component of the cleavage and polyadenylation specificity factor (CPSF) complex, composed of CPSF1, CPSF2, CPSF3, CPSF4 and FIP1L1. Found in a complex with CPSF1, FIP1L1 and PAPOLA. Interacts with FIP1L1 and SRRM1. Interacts with TUT1; the interaction is direct and mediates the recruitment of the CPSF complex on the 3'UTR of selected pre-mRNAs. Interacts with TENT2/GLD2.

The protein resides in the nucleus. It localises to the nucleoplasm. Functionally, component of the cleavage and polyadenylation specificity factor (CPSF) complex that plays a key role in pre-mRNA 3'-end formation, recognizing the AAUAAA signal sequence and interacting with poly(A) polymerase and other factors to bring about cleavage and poly(A) addition. This subunit is involved in the RNA recognition step of the polyadenylation reaction. May play a role in eye morphogenesis and the development of retinal ganglion cell projections to the midbrain. This is Cleavage and polyadenylation specificity factor subunit 1 (Cpsf1) from Mus musculus (Mouse).